Consider the following 350-residue polypeptide: Phosphoribosylformylglycinamidine cyclo-ligase (350 aa).

The protein belongs to the AIR synthase family.

It is found in the cytoplasm. The enzyme catalyses 2-formamido-N(1)-(5-O-phospho-beta-D-ribosyl)acetamidine + ATP = 5-amino-1-(5-phospho-beta-D-ribosyl)imidazole + ADP + phosphate + H(+). Its pathway is purine metabolism; IMP biosynthesis via de novo pathway; 5-amino-1-(5-phospho-D-ribosyl)imidazole from N(2)-formyl-N(1)-(5-phospho-D-ribosyl)glycinamide: step 2/2. This is Phosphoribosylformylglycinamidine cyclo-ligase from Cupriavidus pinatubonensis (strain JMP 134 / LMG 1197) (Cupriavidus necator (strain JMP 134)).